The chain runs to 516 residues: L-amino acid oxidase bordonein-L (516 aa).

An N-terminal signal peptide occupies residues Met-1 to Cys-18. A disulfide bridge connects residues Cys-28 and Cys-189. FAD-binding positions include Met-61 to Ala-62, Glu-81 to Ala-82, Arg-89, and Gly-103 to Arg-106. 2 residues coordinate substrate: Arg-106 and His-239. Val-279 is a binding site for FAD. A disulfide bond links Cys-349 and Cys-430. N-linked (GlcNAc...) asparagine glycosylation occurs at Asn-379. Residue Tyr-390 participates in substrate binding. Residues Glu-475 and Gly-482 to Thr-487 contribute to the FAD site. Gly-482–Trp-483 contacts substrate.

As to quaternary structure, homodimer; non-covalently linked. FAD is required as a cofactor. Post-translationally, N-glycosylated. N-glycan probably consists of the disaccharide N-acetylglucosamine-fucose (HexNAc-Fuc). In terms of tissue distribution, expressed by the venom gland.

It is found in the secreted. It catalyses the reaction an L-alpha-amino acid + O2 + H2O = a 2-oxocarboxylate + H2O2 + NH4(+). The catalysed reaction is L-leucine + O2 + H2O = 4-methyl-2-oxopentanoate + H2O2 + NH4(+). It carries out the reaction L-phenylalanine + O2 + H2O = 3-phenylpyruvate + H2O2 + NH4(+). The enzyme catalyses L-tryptophan + O2 + H2O = indole-3-pyruvate + H2O2 + NH4(+). It catalyses the reaction L-methionine + O2 + H2O = 4-methylsulfanyl-2-oxobutanoate + H2O2 + NH4(+). The catalysed reaction is L-isoleucine + O2 + H2O = (S)-3-methyl-2-oxopentanoate + H2O2 + NH4(+). It carries out the reaction L-arginine + O2 + H2O = 5-guanidino-2-oxopentanoate + H2O2 + NH4(+). The enzyme catalyses L-histidine + O2 + H2O = 3-(imidazol-5-yl)pyruvate + H2O2 + NH4(+). Functionally, catalyzes an oxidative deamination of predominantly hydrophobic and aromatic L-amino acids, thus producing hydrogen peroxide that may contribute to the diverse toxic effects of this enzyme. Is highly active on L-Met, L-Leu, L-Trp, and L-Phe, moderately active on L-Ile, L-His, and L-Arg, and weakly or not active on L-Gln, L-Val, L-Asn, L-Ala, L-Lys, L-Ser, L-Thr, L-Pro, L-Asp, L-Gly, L-Tyr, L-Cys and L-Glu. This enzyme exhibits diverse biological activities, such as hemorrhage, hemolysis, edema, apoptosis of vascular endothelial cells or tumor cell lines, antibacterial and antiparasitic activities, as well as regulation of platelet aggregation. Its effect on platelets is controversial, since it either induces aggregation or inhibits agonist-induced aggregation. These different effects are probably due to different experimental conditions. In vitro, the enzyme exhibits cytotoxicity against fibroblast cell line and kills Leishmania amazonensis promastigotes, intensified by substrate addition. The sequence is that of L-amino acid oxidase bordonein-L from Crotalus durissus terrificus (South American rattlesnake).